A 658-amino-acid chain; its full sequence is Glycogen debranching enzyme (658 aa).

Catalysis depends on aspartate 336, which acts as the Nucleophile. Glutamate 371 functions as the Proton donor in the catalytic mechanism. Residues 459–484 (EANGEENRDGTNSNYSDNHGKEGLGG) are disordered.

The protein belongs to the glycosyl hydrolase 13 family.

It carries out the reaction Hydrolysis of (1-&gt;6)-alpha-D-glucosidic linkages to branches with degrees of polymerization of three or four glucose residues in limit dextrin.. It functions in the pathway glycan degradation; glycogen degradation. Its function is as follows. Removes maltotriose and maltotetraose chains that are attached by 1,6-alpha-linkage to the limit dextrin main chain, generating a debranched limit dextrin. The sequence is that of Glycogen debranching enzyme from Salmonella dublin (strain CT_02021853).